Consider the following 448-residue polypeptide: Na(+)-malate symporter (448 aa).

Helical transmembrane passes span 31-51, 60-80, 86-106, 123-143, 153-173, 182-202, 214-234, 276-293, 297-319, 333-353, and 359-379; these read IGVI…LAAY, LGGF…GQRI, IGGP…YNVL, FLYF…NRIV, VPLV…GFIF, FFVV…PLSI, VFVS…IICA, LMGA…FGGL, FIFI…ANIL, FISS…FIPL, and VISI…IGSG.

It belongs to the 2-hydroxycarboxylate transporter (2-HCT) (TC 2.A.24) family.

The protein localises to the cell membrane. Its function is as follows. Acts as a Na(+)-malate symporter, as it catalyzes malate-dependent uptake of Na(+) and Na(+)-dependent uptake of malate. The protein is Na(+)-malate symporter of Bacillus subtilis (strain 168).